A 337-amino-acid chain; its full sequence is Nucleoid-associated protein PBPRA2585 (337 aa).

This sequence belongs to the YejK family.

The protein resides in the cytoplasm. Its subcellular location is the nucleoid. This is Nucleoid-associated protein PBPRA2585 from Photobacterium profundum (strain SS9).